Consider the following 580-residue polypeptide: Putative multidrug export ATP-binding/permease protein YgaD (580 aa).

Residues 1–17 lie on the Cytoplasmic side of the membrane; the sequence is MGVMKRYMQFVKPYKKQ. The chain crosses the membrane as a helical span at residues 18–38; that stretch reads IFVTVLIGIVKFSIPLALPLL. One can recognise an ABC transmembrane type-1 domain in the interval 19-307; it reads FVTVLIGIVK…LINSSTTLTQ (289 aa). Over 39 to 57 the chain is Extracellular; sequence LKYVVDDIIQGGGTASDKT. A helical membrane pass occupies residues 58–78; sequence TSLFTIMAIMFALFLILRPPV. At 79 to 135 the chain is on the cytoplasmic side; it reads EYYRQYFAQWTASKVLYDIRAKLFDHIQKLSLRFYANTRTGEVISRVINDVEQTKDF. A helical membrane pass occupies residues 136–156; that stretch reads VITGLMNIWLDMLTILIVISI. Residues 157 to 163 are Extracellular-facing; it reads MLTLDVK. A helical membrane pass occupies residues 164 to 184; sequence LTLISIVLFPLYGISVKYFYG. Over 185–243 the chain is Cytoplasmic; that stretch reads RLRKLTRERSQALAQVQGHLHERIQGMPVIRSFAIEDHEQAQFNEKNGHFLDKAIRHTN. A helical transmembrane segment spans residues 244 to 263; sequence WNAKTFAVVNTITDLAPLIV. Residues 264–268 are Extracellular-facing; that stretch reads IACAG. The chain crosses the membrane as a helical span at residues 269 to 288; the sequence is YFVINGPLTVGTMVAFVGYI. Over 289 to 580 the chain is Cytoplasmic; it reads DRMYNPVRRL…KHLFTIQNLN (292 aa). The region spanning 341 to 576 is the ABC transporter domain; sequence VEFQNVSFQY…ESQYKHLFTI (236 aa). 375–382 lines the ATP pocket; it reads GMSGGGKS.

This sequence belongs to the ABC transporter superfamily. In terms of assembly, homodimer.

Its subcellular location is the cell membrane. Functionally, may be involved in multidrug export. Transmembrane domains (TMD) form a pore in the cell membrane and the ATP-binding domain (NBD) is responsible for energy generation. This Bacillus subtilis (strain 168) protein is Putative multidrug export ATP-binding/permease protein YgaD (ygaD).